The following is a 394-amino-acid chain: Elongation factor Tu 2 (394 aa).

One can recognise a tr-type G domain in the interval 10–204; sequence KPHVNVGTIG…YLDSYIPEPE (195 aa). A G1 region spans residues 19–26; it reads GHVDHGKT. 19 to 26 is a GTP binding site; that stretch reads GHVDHGKT. T26 serves as a coordination point for Mg(2+). Residues 60-64 form a G2 region; the sequence is GITIN. Residues 81-84 are G3; that stretch reads DCPG. GTP contacts are provided by residues 81–85 and 136–139; these read DCPGH and NKCD. The G4 stretch occupies residues 136 to 139; it reads NKCD. Residues 174-176 form a G5 region; that stretch reads SAL.

Belongs to the TRAFAC class translation factor GTPase superfamily. Classic translation factor GTPase family. EF-Tu/EF-1A subfamily. Monomer.

The protein localises to the cytoplasm. The enzyme catalyses GTP + H2O = GDP + phosphate + H(+). Its function is as follows. GTP hydrolase that promotes the GTP-dependent binding of aminoacyl-tRNA to the A-site of ribosomes during protein biosynthesis. The chain is Elongation factor Tu 2 from Serratia proteamaculans (strain 568).